A 628-amino-acid polypeptide reads, in one-letter code: MBT domain-containing protein 1 (628 aa).

A disordered region spans residues 1-31 (MFDGYDSCSEDTSSSSSSEESEEEVAPLPSN). Residues 45–80 (PDGKSGMATCEMCGMVGVRDAFYSKTKRFCSVSCSR) form an FCS-type zinc finger. Residues Cys54, Cys57, Cys74, and Cys78 each coordinate Zn(2+). An N6-acetyllysine modification is found at Lys115. MBT repeat units lie at residues 141 to 245 (FSWG…LVPP), 253 to 350 (TNWK…IGHR), 351 to 456 (FKRS…LTPP), and 464 to 560 (FKWF…LQPP). Disordered regions lie at residues 560 to 590 (PASQ…HKKM) and 606 to 628 (NFLQ…KQEP). Residues 562–573 (SQSSRENQSASS) are compositionally biased toward low complexity. Residues 574-590 (KQKKKAKSQQYKGHKKM) are compositionally biased toward basic residues. Residues 609-620 (QGASDQESNGSA) are compositionally biased toward polar residues.

As to quaternary structure, monomer. Component of the NuA4 histone acetyltransferase complex. Interacts with EPC1; interaction is direct and promotes recruitment of MBTD1 into the NuA4 histone acetyltransferase complex.

It is found in the nucleus. Its subcellular location is the chromosome. Chromatin reader component of the NuA4 histone acetyltransferase complex, a multiprotein complex involved in transcriptional activation of select genes principally by acetylation of nucleosomal histones H4 and H2A. The NuA4 complex plays a direct role in repair of DNA double-strand breaks (DSBs) by promoting homologous recombination (HR). MBTD1 specifically recognizes and binds monomethylated and dimethylated 'Lys-20' on histone H4 (H4K20me1 and H4K20me2, respectively). In the NuA4 complex, MBTD1 promotes recruitment of the complex to H4K20me marks by competing with TP53BP1 for binding to H4K20me. Following recruitment to H4K20me at DNA breaks, the NuA4 complex catalyzes acetylation of 'Lys-15' on histone H2A (H2AK15), blocking the ubiquitination mark required for TP53BP1 localization at DNA breaks, thereby promoting homologous recombination (HR). In Homo sapiens (Human), this protein is MBT domain-containing protein 1.